The following is a 397-amino-acid chain: MRIGVVGLGKAFMLMLPTFLMDRRVQLVAASDTDPLSLRQFKADFPAAAVHGDIESLCKNPDVEVVYIGTPHQFHAVHAEIALNAGKHVLVEKPMAVTLEDCCRMNACAQRAGKYLIVGHSHSFDHPISRAKELIDSGRYGRVRFIHSMNYTDFLYRPRRAEELNTDLGGGVVFNQASHQLDVIRLLAQGRVVDVSSYLGRWDAARRTEGAYSALIKFDNGVAANVTYSGYAHYNSDEVMGWVNELGEKQPERRLFPTRLRLDEVLNKGSEAAYKNEMSYGRGWSAHGLPKMARNHQHFGHLVISCEGADIVPKAEKIEVFANGEYHCENFSMPDFPRQEVMDELFDAISGTRPPVHTGEWAMETLDLCIALLEGGKPELIGMRATAVACAGRSSGR.

This sequence to P.putida PHT4.

This Comamonas testosteroni (Pseudomonas testosteroni) protein is 1-carboxy-3-chloro-3,4-dihydroxycyclo hexa-1,5-diene dehydrogenase (cbaC).